We begin with the raw amino-acid sequence, 141 residues long: ATP synthase epsilon chain (141 aa).

This sequence belongs to the ATPase epsilon chain family. F-type ATPases have 2 components, CF(1) - the catalytic core - and CF(0) - the membrane proton channel. CF(1) has five subunits: alpha(3), beta(3), gamma(1), delta(1), epsilon(1). CF(0) has three main subunits: a, b and c.

It is found in the cell membrane. Its function is as follows. Produces ATP from ADP in the presence of a proton gradient across the membrane. In Mycoplasma mobile (strain ATCC 43663 / 163K / NCTC 11711) (Mesomycoplasma mobile), this protein is ATP synthase epsilon chain.